A 72-amino-acid chain; its full sequence is Translation initiation factor IF-1 (72 aa).

Residues 1–72 (MAKDDVIEIQ…TKGRITYRFK (72 aa)) enclose the S1-like domain.

Belongs to the IF-1 family. In terms of assembly, component of the 30S ribosomal translation pre-initiation complex which assembles on the 30S ribosome in the order IF-2 and IF-3, IF-1 and N-formylmethionyl-tRNA(fMet); mRNA recruitment can occur at any time during PIC assembly.

Its subcellular location is the cytoplasm. Its function is as follows. One of the essential components for the initiation of protein synthesis. Stabilizes the binding of IF-2 and IF-3 on the 30S subunit to which N-formylmethionyl-tRNA(fMet) subsequently binds. Helps modulate mRNA selection, yielding the 30S pre-initiation complex (PIC). Upon addition of the 50S ribosomal subunit IF-1, IF-2 and IF-3 are released leaving the mature 70S translation initiation complex. This Lacticaseibacillus paracasei (strain ATCC 334 / BCRC 17002 / CCUG 31169 / CIP 107868 / KCTC 3260 / NRRL B-441) (Lactobacillus paracasei) protein is Translation initiation factor IF-1.